The following is a 141-amino-acid chain: Large-conductance mechanosensitive channel (141 aa).

A run of 3 helical transmembrane segments spans residues 14–34, 38–58, and 81–101; these read VMDL…VKSL, IIMP…YFLG, and GSFI…FLMV.

It belongs to the MscL family. Homopentamer.

It is found in the cell inner membrane. Its function is as follows. Channel that opens in response to stretch forces in the membrane lipid bilayer. May participate in the regulation of osmotic pressure changes within the cell. This Rhizobium rhizogenes (strain K84 / ATCC BAA-868) (Agrobacterium radiobacter) protein is Large-conductance mechanosensitive channel.